A 566-amino-acid chain; its full sequence is Chromatin assembly factor 1 subunit B (566 aa).

WD repeat units lie at residues 11 to 54, 64 to 103, 127 to 166, 169 to 208, 228 to 279, and 351 to 392; these read HNKE…DGKA, RHTKAVNVVRFSPSGEVLASGGDDAVILLWKLNDSKELEP, GHLEDVYDICWTSDGNYMASASVDNTAIMWDVVKGQKVSI, EHKSYVQGITWDPLGQYIATLSCDRVLRVYNTQTKRVAFN, FHDD…RPMG, and IHYH…IPLK. 2 disordered regions span residues 411–481 and 501–566; these read KSQP…NQPR and IPLK…KPNK. Composition is skewed to polar residues over residues 425–437 and 469–478; these read TEGTSLSTPTLQP and QPASQSTKVN.

The protein belongs to the WD repeat HIR1 family. In terms of assembly, interacts with CHAF1A.

The protein localises to the nucleus. Acts as a component of the histone chaperone complex chromatin assembly factor 1 (CAF-1), which assembles histone octamers onto DNA during replication and repair. CAF-1 performs the first step of the nucleosome assembly process, bringing newly synthesized histones H3 and H4 to replicating DNA; histones H2A/H2B can bind to this chromatin precursor subsequent to DNA replication to complete the histone octamer. In Gallus gallus (Chicken), this protein is Chromatin assembly factor 1 subunit B (CHAF1B).